A 250-amino-acid polypeptide reads, in one-letter code: Flap endonuclease Xni (250 aa).

D104 provides a ligand contact to Mg(2+). A 5'-3' exonuclease domain is found at 160–249 (VQPQQLTDFW…LQGNLQQLRL (90 aa)). K(+)-binding residues include L171, A172, P180, V182, and I185. The segment at 184 to 189 (GIGPKS) is interaction with DNA.

The protein belongs to the Xni family. Requires Mg(2+) as cofactor. It depends on K(+) as a cofactor.

Functionally, has flap endonuclease activity. During DNA replication, flap endonucleases cleave the 5'-overhanging flap structure that is generated by displacement synthesis when DNA polymerase encounters the 5'-end of a downstream Okazaki fragment. The sequence is that of Flap endonuclease Xni from Sodalis glossinidius (strain morsitans).